Consider the following 200-residue polypeptide: 3-isopropylmalate dehydratase small subunit (200 aa).

Belongs to the LeuD family. LeuD type 1 subfamily. In terms of assembly, heterodimer of LeuC and LeuD.

It carries out the reaction (2R,3S)-3-isopropylmalate = (2S)-2-isopropylmalate. It participates in amino-acid biosynthesis; L-leucine biosynthesis; L-leucine from 3-methyl-2-oxobutanoate: step 2/4. Catalyzes the isomerization between 2-isopropylmalate and 3-isopropylmalate, via the formation of 2-isopropylmaleate. The protein is 3-isopropylmalate dehydratase small subunit of Haemophilus influenzae (strain 86-028NP).